Consider the following 570-residue polypeptide: Urease subunit alpha (570 aa).

The Urease domain maps to 131–570 (GGMDSHIHFI…LPMAQRYFLF (440 aa)). Ni(2+)-binding residues include His-136, His-138, and Lys-219. Lys-219 is subject to N6-carboxylysine. Substrate is bound at residue His-221. His-248 and His-274 together coordinate Ni(2+). Residue His-322 is the Proton donor of the active site. Asp-362 is a binding site for Ni(2+).

It belongs to the metallo-dependent hydrolases superfamily. Urease alpha subunit family. Heterotrimer of UreA (gamma), UreB (beta) and UreC (alpha) subunits. Three heterotrimers associate to form the active enzyme. Requires Ni cation as cofactor. Post-translationally, carboxylation allows a single lysine to coordinate two nickel ions.

Its subcellular location is the cytoplasm. The enzyme catalyses urea + 2 H2O + H(+) = hydrogencarbonate + 2 NH4(+). It participates in nitrogen metabolism; urea degradation; CO(2) and NH(3) from urea (urease route): step 1/1. In Rhizobium leguminosarum bv. trifolii (strain WSM2304), this protein is Urease subunit alpha.